The primary structure comprises 672 residues: tRNA 5-methylaminomethyl-2-thiouridine biosynthesis bifunctional protein MnmC (672 aa).

The tract at residues 1-241 is tRNA (mnm(5)s(2)U34)-methyltransferase; that stretch reads MHKVQFADVH…KRECLQGVKA (241 aa). The segment at 269 to 672 is FAD-dependent cmnm(5)s(2)U34 oxidoreductase; sequence IGGGIASVFS…LLKGSQVKQG (404 aa).

In the N-terminal section; belongs to the methyltransferase superfamily. tRNA (mnm(5)s(2)U34)-methyltransferase family. This sequence in the C-terminal section; belongs to the DAO family. It depends on FAD as a cofactor.

The protein localises to the cytoplasm. It catalyses the reaction 5-aminomethyl-2-thiouridine(34) in tRNA + S-adenosyl-L-methionine = 5-methylaminomethyl-2-thiouridine(34) in tRNA + S-adenosyl-L-homocysteine + H(+). Its function is as follows. Catalyzes the last two steps in the biosynthesis of 5-methylaminomethyl-2-thiouridine (mnm(5)s(2)U) at the wobble position (U34) in tRNA. Catalyzes the FAD-dependent demodification of cmnm(5)s(2)U34 to nm(5)s(2)U34, followed by the transfer of a methyl group from S-adenosyl-L-methionine to nm(5)s(2)U34, to form mnm(5)s(2)U34. The chain is tRNA 5-methylaminomethyl-2-thiouridine biosynthesis bifunctional protein MnmC from Pasteurella multocida (strain Pm70).